The primary structure comprises 734 residues: Tripartite terminase subunit 3 (734 aa).

The short motif at 183-189 is the Nuclear localization signal element; sequence PKKRAKV. The Walker A motif motif lies at 258–265; that stretch reads VPRRHGKT. A Walker B motif motif is present at residues 352–357; it reads LLFVDE. Glu357 (for ATPase activity) is an active-site residue. Residues Asp509, Glu581, and Asp706 each act as for nuclease activity in the active site.

The protein belongs to the herpesviridae TRM3 protein family. In terms of assembly, interacts with the terminase subunits TRM1 and TRM2. Interacts with portal protein.

It localises to the host nucleus. Component of the molecular motor that translocates viral genomic DNA in empty capsid during DNA packaging. Forms a tripartite terminase complex together with TRM1 and TRM2 in the host cytoplasm. Once the complex reaches the host nucleus, it interacts with the capsid portal vertex. This portal forms a ring in which genomic DNA is translocated into the capsid. TRM3 carries an RNase H-like nuclease activity that plays an important role for the cleavage of concatemeric viral DNA into unit length genomes. The protein is Tripartite terminase subunit 3 of Human herpesvirus 2 (strain HG52) (HHV-2).